A 242-amino-acid chain; its full sequence is Tryptophan synthase alpha chain (242 aa).

Catalysis depends on proton acceptor residues glutamate 32 and aspartate 43.

The protein belongs to the TrpA family. As to quaternary structure, tetramer of two alpha and two beta chains.

The protein resides in the plastid. It localises to the chloroplast. The enzyme catalyses (1S,2R)-1-C-(indol-3-yl)glycerol 3-phosphate + L-serine = D-glyceraldehyde 3-phosphate + L-tryptophan + H2O. It participates in amino-acid biosynthesis; L-tryptophan biosynthesis; L-tryptophan from chorismate: step 5/5. Its function is as follows. The alpha subunit is responsible for the aldol cleavage of indoleglycerol phosphate to indole and glyceraldehyde 3-phosphate. The polypeptide is Tryptophan synthase alpha chain (Cyanidium caldarium (Red alga)).